A 275-amino-acid chain; its full sequence is MGIKAYKPTSPGRRQMTVLTFEEITKKEPEKSLLAPLTKKAGRNVYGRITVRHRGGGHKRRYRIIDFKRDKDGIPGKVAAIEYDPNRTAFIALIHYADGEKRYIIAPHGLKVGDIVESGENVDIKVGNALPLRNIPVGTIVHNIELIPGKGGQLVRAAGAAAQLMAKEGDYVHIRMPSGEIRLINANCRATIGQVSNIDHENVKIGKAGRSRWLGIRPTVRGSAMNPVDHPHGGGEGKAPIGHPGPLTPWGKPALGYKTRKKGKASDKFIVKRRK.

Residues 224–275 (AMNPVDHPHGGGEGKAPIGHPGPLTPWGKPALGYKTRKKGKASDKFIVKRRK) form a disordered region. Residues 264 to 275 (KASDKFIVKRRK) are compositionally biased toward basic and acidic residues.

This sequence belongs to the universal ribosomal protein uL2 family. In terms of assembly, part of the 50S ribosomal subunit. Forms a bridge to the 30S subunit in the 70S ribosome.

One of the primary rRNA binding proteins. Required for association of the 30S and 50S subunits to form the 70S ribosome, for tRNA binding and peptide bond formation. It has been suggested to have peptidyltransferase activity; this is somewhat controversial. Makes several contacts with the 16S rRNA in the 70S ribosome. The protein is Large ribosomal subunit protein uL2 of Caldanaerobacter subterraneus subsp. tengcongensis (strain DSM 15242 / JCM 11007 / NBRC 100824 / MB4) (Thermoanaerobacter tengcongensis).